The following is a 330-amino-acid chain: Fructose-1,6-bisphosphatase class 1 (330 aa).

Mg(2+) contacts are provided by Glu84, Asp103, Leu105, and Asp106. Substrate-binding positions include 106 to 109 (DGSS), Asn196, and Lys262. Glu268 serves as a coordination point for Mg(2+).

Belongs to the FBPase class 1 family. Homotetramer. It depends on Mg(2+) as a cofactor.

The protein resides in the cytoplasm. It carries out the reaction beta-D-fructose 1,6-bisphosphate + H2O = beta-D-fructose 6-phosphate + phosphate. It functions in the pathway carbohydrate biosynthesis; gluconeogenesis. This is Fructose-1,6-bisphosphatase class 1 from Shewanella sp. (strain W3-18-1).